The chain runs to 309 residues: Sulfate adenylyltransferase subunit 2 (309 aa).

This sequence belongs to the PAPS reductase family. CysD subfamily. In terms of assembly, heterodimer composed of CysD, the smaller subunit, and CysN.

It catalyses the reaction sulfate + ATP + H(+) = adenosine 5'-phosphosulfate + diphosphate. Its pathway is sulfur metabolism; hydrogen sulfide biosynthesis; sulfite from sulfate: step 1/3. Its function is as follows. With CysN forms the ATP sulfurylase (ATPS) that catalyzes the adenylation of sulfate producing adenosine 5'-phosphosulfate (APS) and diphosphate, the first enzymatic step in sulfur assimilation pathway. APS synthesis involves the formation of a high-energy phosphoric-sulfuric acid anhydride bond driven by GTP hydrolysis by CysN coupled to ATP hydrolysis by CysD. The protein is Sulfate adenylyltransferase subunit 2 of Mycobacterium bovis (strain ATCC BAA-935 / AF2122/97).